The sequence spans 136 residues: Protein NrdI (136 aa).

Belongs to the NrdI family.

In terms of biological role, probably involved in ribonucleotide reductase function. This Salmonella paratyphi B (strain ATCC BAA-1250 / SPB7) protein is Protein NrdI.